The chain runs to 119 residues: Immunoglobulin lambda variable 4-69 (119 aa).

Positions 1 to 20 (MAWTPLLFLTLLLHCTGSLS) are cleaved as a signal peptide. Residues 21–45 (QLVLTQSPSASASLGASVKLTCTLS) are framework-1. Positions 21–119 (QLVLTQSPSA…YYCQTWGTGI (99 aa)) constitute an Ig-like domain. An intrachain disulfide couples Cys42 to Cys112. Positions 46–52 (SGHSSYA) are complementarity-determining-1. The framework-2 stretch occupies residues 53–69 (IAWHQQQPEKGPRYLMK). The complementarity-determining-2 stretch occupies residues 70-76 (LNSDGSH). The tract at residues 73-92 (DGSHSKGDGIPDRFSGSSSG) is disordered. The segment at 77–112 (SKGDGIPDRFSGSSSGAERYLTISSLQSEDEADYYC) is framework-3. The segment at 113–119 (QTWGTGI) is complementarity-determining-3.

In terms of assembly, immunoglobulins are composed of two identical heavy chains and two identical light chains; disulfide-linked.

It localises to the secreted. The protein localises to the cell membrane. V region of the variable domain of immunoglobulin light chains that participates in the antigen recognition. Immunoglobulins, also known as antibodies, are membrane-bound or secreted glycoproteins produced by B lymphocytes. In the recognition phase of humoral immunity, the membrane-bound immunoglobulins serve as receptors which, upon binding of a specific antigen, trigger the clonal expansion and differentiation of B lymphocytes into immunoglobulins-secreting plasma cells. Secreted immunoglobulins mediate the effector phase of humoral immunity, which results in the elimination of bound antigens. The antigen binding site is formed by the variable domain of one heavy chain, together with that of its associated light chain. Thus, each immunoglobulin has two antigen binding sites with remarkable affinity for a particular antigen. The variable domains are assembled by a process called V-(D)-J rearrangement and can then be subjected to somatic hypermutations which, after exposure to antigen and selection, allow affinity maturation for a particular antigen. The polypeptide is Immunoglobulin lambda variable 4-69 (Homo sapiens (Human)).